The sequence spans 890 residues: Translation initiation factor IF-2 (890 aa).

The tract at residues 45–304 (LIDHLNQKNS…LQQGFQKPAQ (260 aa)) is disordered. Residues 67–81 (STLNIPGTGGKSKSV) are compositionally biased toward polar residues. The span at 92 to 217 (VKRDPQEAER…RMAEENKWTD (126 aa)) shows a compositional bias: basic and acidic residues. The span at 252-266 (GRGRNAKAARPKKGN) shows a compositional bias: basic residues. Residues 267-280 (KHAESKADREEARA) are compositionally biased toward basic and acidic residues. The 170-residue stretch at 389–558 (PRAPVVTIMG…LLQAEVLELK (170 aa)) folds into the tr-type G domain. The interval 398 to 405 (GHVDHGKT) is G1. GTP is bound at residue 398-405 (GHVDHGKT). The G2 stretch occupies residues 423–427 (GITQH). The G3 stretch occupies residues 444–447 (DTPG). GTP is bound by residues 444 to 448 (DTPGH) and 498 to 501 (NKID). The segment at 498–501 (NKID) is G4. A G5 region spans residues 534–536 (SAK). Lys-808 is subject to N6-acetyllysine.

This sequence belongs to the TRAFAC class translation factor GTPase superfamily. Classic translation factor GTPase family. IF-2 subfamily.

It is found in the cytoplasm. One of the essential components for the initiation of protein synthesis. Protects formylmethionyl-tRNA from spontaneous hydrolysis and promotes its binding to the 30S ribosomal subunits. Also involved in the hydrolysis of GTP during the formation of the 70S ribosomal complex. The polypeptide is Translation initiation factor IF-2 (Escherichia coli (strain SMS-3-5 / SECEC)).